The following is an 838-amino-acid chain: Protein translocase subunit SecA (838 aa).

ATP contacts are provided by residues Q85, 103–107 (GEGKT), and D493. 4 residues coordinate Zn(2+): C823, C825, C834, and H835.

Belongs to the SecA family. In terms of assembly, monomer and homodimer. Part of the essential Sec protein translocation apparatus which comprises SecA, SecYEG and auxiliary proteins SecDF. Other proteins may also be involved. Requires Zn(2+) as cofactor.

It localises to the cell membrane. The protein localises to the cytoplasm. It carries out the reaction ATP + H2O + cellular proteinSide 1 = ADP + phosphate + cellular proteinSide 2.. Its function is as follows. Part of the Sec protein translocase complex. Interacts with the SecYEG preprotein conducting channel. Has a central role in coupling the hydrolysis of ATP to the transfer of proteins into and across the cell membrane, serving as an ATP-driven molecular motor driving the stepwise translocation of polypeptide chains across the membrane. This chain is Protein translocase subunit SecA, found in Streptococcus gordonii (strain Challis / ATCC 35105 / BCRC 15272 / CH1 / DL1 / V288).